The sequence spans 232 residues: MAYVALSDKPHLSGEVGEEACSSWNPPLFSPRPLPRLWPLPGTPFLPIRALPFSASSSGKSSLVPSPSSSAHSGFRTPCLGPDCLLCTQGCELHEGRNHMAVHSCVARAWPGDPQEVRHLNPLLCDPGSQVEPSWPWHPGLEQAAASWVGNHVSPAHRQALRGHSLGSALRALMPGGHCPLCVPCKRGCNLRGGRGKHGPRPCCPLLRKFPVLPVHPWPFPCAVWDSGWSCR.

This is an uncharacterized protein from Homo sapiens (Human).